A 410-amino-acid polypeptide reads, in one-letter code: Heat stress transcription factor A-9 (410 aa).

A disordered region spans residues 1-44; sequence MGSKKRSPQHPAAAAPPPAVGGGGGGEVSGDGGASTANGPVVPK. Residues 20 to 33 are compositionally biased toward gly residues; that stretch reads VGGGGGGEVSGDGG. Residues 171-246 are a coiled coil; sequence GLEKEVETLK…QLVQQQQQQR (76 aa). Residues 179–229 form a hydrophobic repeat HR-A/B region; the sequence is LKRDKALLMQQLVDLRHYQQTSNLEVQNLIERLQVMEQNQQQMMALLAIVV. The short motif at 256 to 260 is the Nuclear localization signal element; sequence SKKRR. A Nuclear export signal motif is present at residues 279-290; the sequence is AHIVEYLPPVPE.

It belongs to the HSF family. Class A subfamily. In terms of assembly, homotrimer. In terms of processing, exhibits temperature-dependent phosphorylation.

Its subcellular location is the cytoplasm. It localises to the nucleus. Transcriptional regulator that specifically binds DNA of heat shock promoter elements (HSE). The sequence is that of Heat stress transcription factor A-9 (HSFA9) from Oryza sativa subsp. japonica (Rice).